The primary structure comprises 471 residues: Putative multidrug resistance protein MdtD (471 aa).

Topologically, residues 1-11 (MTDLPDSTRWQ) are periplasmic. The chain crosses the membrane as a helical span at residues 12 to 32 (LWIVAFGFFMQSLDTTIVNTA). The Cytoplasmic portion of the chain corresponds to 33–48 (LPSMAQSLGESPLHMH). The chain crosses the membrane as a helical span at residues 49 to 69 (MVIVSYVLTVAVMLPASGWLA). The Periplasmic portion of the chain corresponds to 70 to 76 (DKVGVRN). Residues 77 to 97 (IFFTAIVLFTLGSLFCALSGT) traverse the membrane as a helical segment. The Cytoplasmic segment spans residues 98–101 (LNEL). The chain crosses the membrane as a helical span at residues 102–124 (LLARALQGVGGAMMVPVGRLTVM). At 125-137 (KIVPREQYMAAMT) the chain is on the periplasmic side. Residues 138–158 (FVTLPGQIGPLLGPALGGLLV) form a helical membrane-spanning segment. The Cytoplasmic portion of the chain corresponds to 159-164 (EYASWH). The chain crosses the membrane as a helical span at residues 165 to 185 (WIFLINIPVGIIGAITTLMLM). The Periplasmic portion of the chain corresponds to 186–196 (PNYTMQTRRFD). The helical transmembrane segment at 197–217 (LSGFLLLAVGMAVLTLALDGS) threads the bilayer. At 218–224 (KGTGFSP) the chain is on the cytoplasmic side. A helical transmembrane segment spans residues 225–245 (LAIAGLVAVGVVALVLYLLHA). The Periplasmic portion of the chain corresponds to 246–262 (QNNNRALFSLKLFRTRT). Residues 263–283 (FSLGLAGSFAGRIGSGMLPFM) traverse the membrane as a helical segment. Topologically, residues 284–285 (TP) are cytoplasmic. Residues 286–306 (VFLQIGFGFSPFHAGLMMIPM) form a helical membrane-spanning segment. The Periplasmic segment spans residues 307-341 (VLGSMGMKRIVVQVVNRFGYRRVLVATTLGLSLVT). Residues 342–362 (LLFMTTALLGWYYVLPFVLFL) form a helical membrane-spanning segment. Residues 363–395 (QGMVNSTRFSSMNTLTLKDLPDNLASSGNSLLS) are Cytoplasmic-facing. A helical membrane pass occupies residues 396-416 (MIMQLSMSIGVTIAGLLLGLF). Residues 417-430 (GSQHVSVDSGTTQT) lie on the Periplasmic side of the membrane. A helical membrane pass occupies residues 431-451 (VFMYTWLSMASIIALPAFIFA). Residues 452–471 (RVPNDTHQNVAISRRKRSAQ) are Cytoplasmic-facing.

Belongs to the major facilitator superfamily. TCR/Tet family.

It is found in the cell inner membrane. In Escherichia coli O6:H1 (strain CFT073 / ATCC 700928 / UPEC), this protein is Putative multidrug resistance protein MdtD.